A 164-amino-acid polypeptide reads, in one-letter code: Ubiquitin-fold modifier-conjugating enzyme 1 (164 aa).

The Glycyl thioester intermediate role is filled by Cys116.

It belongs to the ubiquitin-conjugating enzyme family. UFC1 subfamily.

E2-like enzyme which forms an intermediate with UFM1 via a thioester linkage. This is Ubiquitin-fold modifier-conjugating enzyme 1 from Drosophila erecta (Fruit fly).